We begin with the raw amino-acid sequence, 398 residues long: Na(+)/H(+) antiporter NhaA (398 aa).

Helical transmembrane passes span 21-41, 66-86, 101-121, 132-152, 161-181, 184-204, 216-236, 274-294, 305-325, 343-363, and 374-394; these read LGGY…NSPL, VLHW…GLEI, IVLP…VYLL, GWAI…ALLG, IFLT…IAVF, AELN…LCVL, LLVG…ATLA, LLIV…GMGI, IALG…WLAI, GVAL…ALAF, and IGVL…LRVL.

Belongs to the NhaA Na(+)/H(+) (TC 2.A.33) antiporter family.

It localises to the cell inner membrane. The enzyme catalyses Na(+)(in) + 2 H(+)(out) = Na(+)(out) + 2 H(+)(in). Functionally, na(+)/H(+) antiporter that extrudes sodium in exchange for external protons. The polypeptide is Na(+)/H(+) antiporter NhaA (Bordetella bronchiseptica (strain ATCC BAA-588 / NCTC 13252 / RB50) (Alcaligenes bronchisepticus)).